Here is a 35-residue protein sequence, read N- to C-terminus: Tamulustoxin (35 aa).

Disulfide bonds link Cys2–Cys22, Cys7–Cys31, and Cys11–Cys33.

Expressed by the venom gland.

Its subcellular location is the secreted. Blocks Kv1.6/KCNA6 potassium channels. The protein is Tamulustoxin of Hottentotta tamulus (Eastern Indian scorpion).